The following is a 512-amino-acid chain: Zinc finger CCCH-type with G patch domain-containing protein (512 aa).

Residues glutamine 159–leucine 186 form a C3H1-type zinc finger. Positions leucine 255–valine 280 are disordered. The span at glutamate 256 to valine 279 shows a compositional bias: acidic residues. Positions threonine 308–glutamine 354 constitute a G-patch domain. Over residues serine 407–serine 417 the composition is skewed to low complexity. The interval serine 407–cysteine 432 is disordered.

Its subcellular location is the nucleus. Functionally, transcription repressor. This chain is Zinc finger CCCH-type with G patch domain-containing protein, found in Aedes aegypti (Yellowfever mosquito).